Here is a 538-residue protein sequence, read N- to C-terminus: Atos homolog protein B (538 aa).

4 disordered regions span residues 1–103 (MRHV…GLVS), 130–149 (GSATSSWTSGTQSTPWPSSN), 163–185 (PDQGGQGCLGESPGPAPSGQLHT), and 199–272 (KSPV…LGCP). Residues 130–148 (GSATSSWTSGTQSTPWPSS) are compositionally biased toward low complexity. A compositionally biased stretch (pro residues) spans 227-238 (HTPPGPGPPGPC). Phosphoserine occurs at positions 254 and 255. The required for macropage invasion stretch occupies residues 348-430 (LLGNFEESLL…VPKVGTIQVT (83 aa)). The segment at 436–444 (QTVVKMFLV) is transactivation domain 1 (TAD1).

This sequence belongs to the ATOS family.

The protein localises to the nucleus. In terms of biological role, transcription regulator that may syncronize transcriptional and translational programs. In Rattus norvegicus (Rat), this protein is Atos homolog protein B.